We begin with the raw amino-acid sequence, 696 residues long: Gametogenetin-binding protein 2 (696 aa).

2 positions are modified to phosphoserine: Ser360 and Ser602.

Interacts with isoform 1 of GGN. In terms of tissue distribution, testis-specific.

The protein resides in the cytoplasmic vesicle. Its function is as follows. May be involved in spermatogenesis. The chain is Gametogenetin-binding protein 2 (Ggnbp2) from Mus musculus (Mouse).